Here is a 224-residue protein sequence, read N- to C-terminus: DNA repair and recombination protein RadB (224 aa).

Belongs to the eukaryotic RecA-like protein family. RadB subfamily.

In terms of biological role, involved in DNA repair and in homologous recombination. May regulate the cleavage reactions of the branch-structured DNA. Has a very weak ATPase activity that is not stimulated by DNA. Binds DNA but does not promote DNA strands exchange. The sequence is that of DNA repair and recombination protein RadB from Thermococcus onnurineus (strain NA1).